The following is a 285-amino-acid chain: Heterogeneous nuclear rnp K-like protein 2 (285 aa).

KH domains are found at residues 9–73 (TVNH…IGDV), 113–178 (IGNL…LVDI), and 205–270 (SVTK…ETML).

Belongs to the HEK2 family. In terms of assembly, binds RNA.

Its subcellular location is the cytoplasm. The protein localises to the P-body. It is found in the nucleus. It localises to the chromosome. The protein resides in the telomere. Its function is as follows. RNA-binding protein involved in the correct localization of transcripts in the cell. RNA localization is a widespread mechanism for achieving localized protein synthesis. Involved in structural and functional organization of telomeric chromatin and regulates silencing at the HMR locus. In Lachancea thermotolerans (strain ATCC 56472 / CBS 6340 / NRRL Y-8284) (Yeast), this protein is Heterogeneous nuclear rnp K-like protein 2 (HEK2).